Here is a 64-residue protein sequence, read N- to C-terminus: Temporin-ALh (64 aa).

An N-terminal signal peptide occupies residues 1 to 22; the sequence is MFPLKKSLLLLFFLATINLSLC. Positions 23–46 are excised as a propeptide; that stretch reads EQERNAEEERRDEPDERNAEVEKR. The residue at position 62 (Ser62) is a Serine amide.

The protein belongs to the frog skin active peptide (FSAP) family. Temporin subfamily. Expressed by the skin glands.

The protein localises to the secreted. Functionally, antimicrobial peptide with activity against Gram-positive and Gram-negative bacteria and against fungi. Has been tested against S.aureus (MIC=2.5 ug/mL), B.pumilus (MIC=7.5 ug/mL), B.cereus (MIC=75.0 ug/mL), E.coli (MIC=5.0 ug/mL), B.dysenteriae (MIC=20.0 ug/mL), A.cacoaceticus (MIC=60.0 ug/mL), P.aeruginosa (MIC=2.5 ug/mL) and C.albicans (MIC=2.5 ug/mL). Also shows a weak hemolytic activity. The chain is Temporin-ALh from Amolops loloensis (Lolokou Sucker Frog).